We begin with the raw amino-acid sequence, 133 residues long: Fatty acid-binding protein, heart (133 aa).

An N-acetylalanine modification is found at alanine 2. Phosphothreonine is present on threonine 8. Tyrosine 20 carries the phosphotyrosine; by Tyr-kinases modification. A Phosphoserine modification is found at serine 23. At threonine 30 the chain carries Phosphothreonine. Serine 83 is subject to Phosphoserine. (9Z)-octadecenoate is bound at residue 127–129 (RTY). Residue 127-129 (RTY) participates in hexadecanoate binding. 127–129 (RTY) provides a ligand contact to octadecanoate.

In terms of tissue distribution, heart, but also skeletal muscle, kidney, brain and mammary gland.

It localises to the cytoplasm. FABPs are thought to play a role in the intracellular transport of long-chain fatty acids and their acyl-CoA esters. This Rattus norvegicus (Rat) protein is Fatty acid-binding protein, heart (Fabp3).